The primary structure comprises 299 residues: YjeF N-terminal domain-containing protein 3 (299 aa).

One can recognise a YjeF N-terminal domain in the interval 74-287 (AAALERELLE…DVRRKFALRL (214 aa)).

In terms of assembly, interacts with APOA1. Binds to HDL. In terms of tissue distribution, expressed in theca cells in ovary and in Leydig cells in testis (at protein level). Also expressed in brain and mammary gland.

Functionally, may accelerate cholesterol efflux from endothelial cells to high-density lipoprotein (HDL) and thereby regulates angiogenesis. May orchestrate hematopoietic stem and progenitor cell emergence from the hemogenic endothelium, a type of specialized endothelium manifesting hematopoietic potential. YJEFN3-mediated cholesterol efflux activates endothelial SREBF2, the master transcription factor for cholesterol biosynthesis, which in turn transactivates NOTCH and promotes hematopoietic stem and progenitor cell emergence. May play a role in spermiogenesis and oogenesis. This chain is YjeF N-terminal domain-containing protein 3 (YJEFN3), found in Homo sapiens (Human).